A 516-amino-acid polypeptide reads, in one-letter code: Cytochrome P450 monooxygenase asR2 (516 aa).

Residues 9–29 form a helical membrane-spanning segment; it reads LNSITFSLLVFLGFVGVSQLI. N-linked (GlcNAc...) asparagine glycosylation is found at Asn248 and Asn273. Cys461 contacts heme.

It belongs to the cytochrome P450 family. Heme serves as cofactor.

Its subcellular location is the membrane. It functions in the pathway secondary metabolite biosynthesis; terpenoid biosynthesis. Functionally, cytochrome P450 monooxygenase; part of the gene cluster that mediates the biosynthesis of xenovulene A, an unusual meroterpenoid that has potent inhibitory effects on the human gamma-aminobutyrate A (GABAA) benzodiazepine receptor. The first step of xenovulene A biosynthesis is the biosynthesis of 3-methylorcinaldehyde performed by the non-reducing polyketide synthase aspks1. The salicylate hydroxylase asL1 then catalyzes the oxidative dearomatization of 3-methylorcinaldehyde to yield a dearomatized hydroxycyclohexadione. The 2-oxoglutarate-dependent dioxygenase asL3 further catalyzes the oxidative ring expansion to provide the first tropolone metabolite. The cytochrome P450 monooxygenase asR2 allows the synthesis of tropolone hemiacetal. In parallel, a previously unrecognised class of terpene cyclase, asR6, produces alpha-humulene from farnesylpyrophosphate (FPP). The putative Diels-Alderase asR5 probably catalyzes the formation of the tropolone-humulene skeleton by linking humulene and the polyketide moiety. Oxidative-ring contractions catalyzed by asL4 and asL6 then processively remove carbon atoms from the polyketide to yield xenovulene A. This chain is Cytochrome P450 monooxygenase asR2, found in Sarocladium schorii (Acremonium strictum (strain IMI 501407)).